Reading from the N-terminus, the 329-residue chain is Endochitinase A (329 aa).

An N-terminal signal peptide occupies residues 1 to 23; that stretch reads MRLCKFTALSSLLFSLLLLSASA. The 42-residue stretch at 24 to 65 folds into the Chitin-binding type-1 domain; that stretch reads EQCGSQAGGARCPSGLCCSKFGWCGNTNDYCGPGNCQSQCPG. Disulfide bonds link cysteine 26–cysteine 41, cysteine 35–cysteine 47, cysteine 40–cysteine 54, and cysteine 59–cysteine 63. A 4-hydroxyproline; partial modification is found at proline 67. A 4-hydroxyproline mark is found at proline 69, proline 71, proline 72, and proline 74. Proline 75 is modified (4-hydroxyproline; partial). Intrachain disulfides connect cysteine 101/cysteine 163, cysteine 175/cysteine 183, and cysteine 282/cysteine 314. Catalysis depends on glutamate 145, which acts as the Proton donor. Residues 323–329 constitute a propeptide, removed in mature form; sequence GLLVDTM.

The protein belongs to the glycosyl hydrolase 19 family. Chitinase class I subfamily. The 4-hydroxyproline residues are not glycosylated in this plant vacuolar protein.

The protein localises to the vacuole. It catalyses the reaction Random endo-hydrolysis of N-acetyl-beta-D-glucosaminide (1-&gt;4)-beta-linkages in chitin and chitodextrins.. Functionally, defense against chitin-containing fungal pathogens. This chain is Endochitinase A (CHN48), found in Nicotiana tabacum (Common tobacco).